Reading from the N-terminus, the 185-residue chain is Monooxygenase hypC (185 aa).

3 consecutive transmembrane segments (helical) span residues 35-55 (TGTF…PVIL), 75-95 (GHIQ…YAAY), and 106-126 (PFAV…VFMA). N-linked (GlcNAc...) asparagine glycosylation is present at N129. The chain crosses the membrane as a helical span at residues 165–185 (ALFPLSGAVLGLLSTCKIVSF).

The protein belongs to the anthrone oxygenase family.

The protein localises to the membrane. The protein operates within mycotoxin biosynthesis. Monooxygenase; part of the fragmented gene cluster that mediates the biosynthesis of dothistromin (DOTH), a polyketide toxin very similar in structure to the aflatoxin precursor, versicolorin B. The first step of the pathway is the conversion of acetate to norsolorinic acid (NOR) and requires the fatty acid synthase subunits hexA and hexB, as well as the polyketide synthase pksA. PksA combines a hexanoyl starter unit and 7 malonyl-CoA extender units to synthesize the precursor NOR. The hexanoyl starter unit is provided to the acyl-carrier protein (ACP) domain by the fungal fatty acid synthase hexA/hexB. The second step is the conversion of NOR to averantin (AVN) and requires the norsolorinic acid ketoreductase nor1, which catalyzes the dehydration of norsolorinic acid to form (1'S)-averantin. The cytochrome P450 monooxygenase avnA then catalyzes the hydroxylation of AVN to 5'hydroxyaverantin (HAVN). The next step is performed by adhA that transforms HAVN to averufin (AVF). Averufin might then be converted to hydroxyversicolorone by cypX and avfA. Hydroxyversicolorone is further converted versiconal hemiacetal acetate (VHA) by moxY. VHA is then the substrate for the versiconal hemiacetal acetate esterase est1 to yield versiconal (VAL). Versicolorin B synthase vbsA then converts VAL to versicolorin B (VERB) by closing the bisfuran ring. Then, the activity of the versicolorin B desaturase verB leads to versicolorin A (VERA). DotB, a predicted chloroperoxidase, may perform epoxidation of the A-ring of VERA. Alternatively, a cytochrome P450, such as cypX or avnA could catalyze this step. It is also possible that another, uncharacterized, cytochrome P450 enzyme is responsible for this step. Opening of the epoxide could potentially be achieved by the epoxide hydrolase epoA. However, epoA seems not to be required for DOTH biosynthesis, but other epoxide hydrolases may have the ability to complement this hydrolysis. Alternatively, opening of the epoxide ring could be achieved non-enzymatically. The next step is the deoxygenation of ring A to yield the 5,8-dihydroxyanthraquinone which is most likely catalyzed by the NADPH dehydrogenase encoded by ver1. The last stages of DOTH biosynthesis are proposed to involve hydroxylation of the bisfuran. OrdB and norB might have oxidative roles here. An alternative possibility is that cytochrome P450 monoogenases such as avnA and cypX might perform these steps in addition to previously proposed steps. The protein is Monooxygenase hypC of Dothistroma septosporum (strain NZE10 / CBS 128990) (Red band needle blight fungus).